Reading from the N-terminus, the 492-residue chain is Steroid 21-hydroxylase (492 aa).

Arginine 91 and lysine 120 together coordinate heme b. Arginine 231 contacts 17alpha-hydroxyprogesterone. Residue arginine 231 participates in progesterone binding. Heme b-binding residues include histidine 363, arginine 424, and cysteine 426.

It belongs to the cytochrome P450 family. It depends on heme b as a cofactor.

It is found in the endoplasmic reticulum membrane. Its subcellular location is the microsome membrane. The enzyme catalyses 17alpha-hydroxyprogesterone + reduced [NADPH--hemoprotein reductase] + O2 = 11-deoxycortisol + oxidized [NADPH--hemoprotein reductase] + H2O + H(+). It carries out the reaction progesterone + reduced [NADPH--hemoprotein reductase] + O2 = 21-hydroxyprogesterone + oxidized [NADPH--hemoprotein reductase] + H2O + H(+). Its function is as follows. Specifically catalyzes the 21-hydroxylation of steroids. Required for the adrenal synthesis of mineralocorticoids and glucocorticoids. The polypeptide is Steroid 21-hydroxylase (CYP21) (Canis lupus familiaris (Dog)).